A 446-amino-acid chain; its full sequence is Telomere-binding protein 51 kDa subunit (446 aa).

Belongs to the telombin family. Monomer.

It is found in the nucleus. It localises to the chromosome. Its subcellular location is the telomere. May function as protective capping of the single-stranded telomeric overhang. May also participate in telomere length regulation during DNA replication. Binds specifically to the T4G4-containing extension on the 3'strand and protects this region of the telomere from nuclease digestion and chemical modification. This Euplotes crassus protein is Telomere-binding protein 51 kDa subunit.